The primary structure comprises 367 residues: Probable peptidoglycan glycosyltransferase FtsW (367 aa).

At 1-8 (MRRVEGYD) the chain is on the cytoplasmic side. The chain crosses the membrane as a helical span at residues 9–29 (MIVLMMAVILTCFGVVMVYSA). The Periplasmic segment spans residues 30-49 (SSVMAAKKFHDGFFFLKRQS). Residues 50–70 (LYALIGFIGMGVAMHVDYHVW) traverse the membrane as a helical segment. Residues 71 to 72 (KK) are Cytoplasmic-facing. A helical membrane pass occupies residues 73–93 (WAVPLFLGTFFLLLLVFVPGI). Residues 94 to 138 (GGTAKGASRWIRLPGFNFQPSELAKVALIMYMAYSLEKRQDKLKQ) lie on the Periplasmic side of the membrane. The helical transmembrane segment at 139-159 (FMSGFFPYMLILGVFIAVLLA) threads the bilayer. At 160–161 (QH) the chain is on the cytoplasmic side. Residues 162-182 (DMGAALTMLAVAIVMLFAAGT) form a helical membrane-spanning segment. A topological domain (periplasmic) is located at residue Lys-183. The helical transmembrane segment at 184-204 (VQYILGMGLVALPGICYLVFT) threads the bilayer. Residues 205 to 225 (KAYRMRRITAFLDPWQDPTDA) lie on the Cytoplasmic side of the membrane. The helical transmembrane segment at 226-246 (GFQIIQSWLALGTGGFFGQGL) threads the bilayer. Topologically, residues 247 to 266 (GEGKQKLFYLPEAHTDFILS) are periplasmic. The helical transmembrane segment at 267-287 (VLGEEMGFIGVVVIASMFLLL) threads the bilayer. Over 288–304 (VQRSIRVAIAAEDSFGR) the chain is Cytoplasmic. A helical transmembrane segment spans residues 305–325 (FLAFGIAILLGLEAFVNMAVV). Over 326-335 (TGLLPTKGIA) the chain is Periplasmic. A helical transmembrane segment spans residues 336 to 356 (LPFLSYGGSSLIISLCSVGVL). Topologically, residues 357–367 (LNVSTRMRGAA) are cytoplasmic.

Belongs to the SEDS family. FtsW subfamily.

It is found in the cell inner membrane. The enzyme catalyses [GlcNAc-(1-&gt;4)-Mur2Ac(oyl-L-Ala-gamma-D-Glu-L-Lys-D-Ala-D-Ala)](n)-di-trans,octa-cis-undecaprenyl diphosphate + beta-D-GlcNAc-(1-&gt;4)-Mur2Ac(oyl-L-Ala-gamma-D-Glu-L-Lys-D-Ala-D-Ala)-di-trans,octa-cis-undecaprenyl diphosphate = [GlcNAc-(1-&gt;4)-Mur2Ac(oyl-L-Ala-gamma-D-Glu-L-Lys-D-Ala-D-Ala)](n+1)-di-trans,octa-cis-undecaprenyl diphosphate + di-trans,octa-cis-undecaprenyl diphosphate + H(+). It participates in cell wall biogenesis; peptidoglycan biosynthesis. Functionally, peptidoglycan polymerase that is essential for cell division. The chain is Probable peptidoglycan glycosyltransferase FtsW from Geobacter sp. (strain M18).